Here is a 210-residue protein sequence, read N- to C-terminus: Small ribosomal subunit protein uS3 (210 aa).

The 69-residue stretch at 38–106 (IRAWLKKRLA…EVQINIVEIR (69 aa)) folds into the KH type-2 domain.

The protein belongs to the universal ribosomal protein uS3 family. In terms of assembly, part of the 30S ribosomal subunit. Forms a tight complex with proteins S10 and S14.

Functionally, binds the lower part of the 30S subunit head. Binds mRNA in the 70S ribosome, positioning it for translation. This Magnetococcus marinus (strain ATCC BAA-1437 / JCM 17883 / MC-1) protein is Small ribosomal subunit protein uS3.